A 754-amino-acid chain; its full sequence is Aspartyl/asparaginyl beta-hydroxylase (754 aa).

Residues 1–48 (MAPRKNAKGGGGNSSSSSSGSPTGCTSGGSSSPGARRETKQGGLKNGR) form a disordered region. Over 1–56 (MAPRKNAKGGGGNSSSSSSGSPTGCTSGGSSSPGARRETKQGGLKNGRKGGLSGSS) the chain is Cytoplasmic. Low complexity predominate over residues 14-34 (SSSSSSGSPTGCTSGGSSSPG). Ser15 carries the phosphoserine modification. A helical; Signal-anchor for type II membrane protein membrane pass occupies residues 57-77 (FFTWFMVIALLGVWTSVAVVW). Residues 78–754 (FDLVDYEEVL…PHQRRSLPAI (677 aa)) lie on the Lumenal side of the membrane. A glycan (N-linked (GlcNAc...) asparagine) is linked at Asn96. Ca(2+)-binding residues include Asp109, Asp111, Asp113, Asp115, and Asp120. Disordered regions lie at residues 176 to 197 (VYSE…ELQP) and 247 to 326 (EQEN…KKKK). Basic and acidic residues-rich tracts occupy residues 261-284 (DAER…DHAV) and 309-318 (TNKKADEPGK). 5 TPR repeats span residues 337 to 370 (IKAE…YPQS), 378 to 411 (AQCE…PDAP), 450 to 483 (TALK…TPND), 485 to 517 (FAKV…GDPG), and 521 to 553 (GRFY…GHFA). The N-linked (GlcNAc...) asparagine glycan is linked to Asn466. Residue Trp621 coordinates 2-oxoglutarate. The cysteines at positions 637 and 644 are disulfide-linked. Residue Ser664 participates in 2-oxoglutarate binding. Position 675 (His675) interacts with Fe cation. 684 to 686 (RMH) provides a ligand contact to 2-oxoglutarate. Asn702 is a glycosylation site (N-linked (GlcNAc...) asparagine). Fe cation is bound at residue His721. Position 731 (Arg731) interacts with 2-oxoglutarate.

This sequence belongs to the aspartyl/asparaginyl beta-hydroxylase family. As to quaternary structure, monomer. It depends on Fe cation as a cofactor. Might be processed to the 56 kDa (AA 289-754) or 52 kDa (AA 311-754) forms in the lumen of the endoplasmic reticulum.

The protein localises to the endoplasmic reticulum membrane. The enzyme catalyses L-aspartyl-[protein] + 2-oxoglutarate + O2 = 3-hydroxy-L-aspartyl-[protein] + succinate + CO2. Its function is as follows. Specifically hydroxylates an Asp or Asn residue in certain epidermal growth factor-like (EGF) domains of a number of proteins. This chain is Aspartyl/asparaginyl beta-hydroxylase (ASPH), found in Bos taurus (Bovine).